Here is a 90-residue protein sequence, read N- to C-terminus: Small ribosomal subunit protein uS15 (90 aa).

It belongs to the universal ribosomal protein uS15 family. As to quaternary structure, part of the 30S ribosomal subunit. Forms a bridge to the 50S subunit in the 70S ribosome, contacting the 23S rRNA.

In terms of biological role, one of the primary rRNA binding proteins, it binds directly to 16S rRNA where it helps nucleate assembly of the platform of the 30S subunit by binding and bridging several RNA helices of the 16S rRNA. Functionally, forms an intersubunit bridge (bridge B4) with the 23S rRNA of the 50S subunit in the ribosome. The protein is Small ribosomal subunit protein uS15 of Aquifex aeolicus (strain VF5).